The chain runs to 354 residues: Neuronal growth regulator 1 (354 aa).

The signal sequence occupies residues 1–37; that stretch reads MDMMLLVQGACCSNQWLAAVLLSLCCLLPSCLPAGQS. Ig-like C2-type domains lie at 38–134, 139–221, and 225–313; these read VDFP…VHLT, PKIY…KVVV, and PTIQ…LPLN. A disulfide bridge links C60 with C118. Residues N73 and N155 are each glycosylated (N-linked (GlcNAc...) asparagine). 2 disulfide bridges follow: C160–C203 and C245–C297. Residue Y187 is modified to Phosphotyrosine. N275, N286, N294, and N307 each carry an N-linked (GlcNAc...) asparagine glycan. The GPI-anchor amidated glycine moiety is linked to residue G324. Residues 325 to 354 constitute a propeptide, removed in mature form; sequence SADVLFSCWYLVLTLSSFTSIFYLKNAILQ.

The protein belongs to the immunoglobulin superfamily. IgLON family.

The protein localises to the cell membrane. Its function is as follows. May be involved in cell-adhesion. May function as a trans-neural growth-promoting factor in regenerative axon sprouting in the mammalian brain. This is Neuronal growth regulator 1 (NEGR1) from Homo sapiens (Human).